A 653-amino-acid polypeptide reads, in one-letter code: Alpha-L-iduronidase (653 aa).

An N-terminal signal peptide occupies residues 1–27 (MRPLRPRAALLALLASLLAAPPVAPAE). Alpha-D-mannopyranose-binding residues include P54, L56, and H58. H91 is an alpha-L-iduronate binding site. N110 is a glycosylation site (N-linked (GlcNAc...) asparagine). Alpha-L-iduronate-binding residues include N181 and E182. E182 (proton donor) is an active-site residue. Residue N190 is glycosylated (N-linked (GlcNAc...) asparagine). K264, E299, and G305 together coordinate alpha-L-iduronate. E299 serves as the catalytic Nucleophile. W306 contacts alpha-D-mannopyranose. Residue N336 is glycosylated (N-linked (GlcNAc...) asparagine). Positions 349 and 363 each coordinate alpha-L-iduronate. 3 N-linked (GlcNAc...) asparagine glycosylation sites follow: N372, N415, and N451. R488 and R492 together coordinate alpha-D-mannopyranose. R492 provides a ligand contact to beta-D-mannose. A disulfide bridge links C541 with C577.

Belongs to the glycosyl hydrolase 39 family. As to quaternary structure, monomer. Post-translationally, N-glycosylation at Asn-372 contributes to substrate binding and is required for full enzymatic activity. Ubiquitous.

The protein localises to the lysosome. It catalyses the reaction Hydrolysis of unsulfated alpha-L-iduronosidic linkages in dermatan sulfate.. The chain is Alpha-L-iduronidase (IDUA) from Homo sapiens (Human).